The primary structure comprises 370 residues: Glutamine synthetase (370 aa).

An N-acetylalanine modification is found at A2. Residue S5 is modified to Phosphoserine. One can recognise a GS beta-grasp domain in the interval 24-103 (IIAEYVWIDG…VLAACYNNDG (80 aa)). A GS catalytic domain is found at 110–370 (HRHEAAKLFA…MTKEFERESS (261 aa)). Residues K283, K324, and K363 each participate in a glycyl lysine isopeptide (Lys-Gly) (interchain with G-Cter in ubiquitin) cross-link.

It belongs to the glutamine synthetase family. In terms of assembly, homooctamer.

The protein localises to the cytoplasm. The catalysed reaction is L-glutamate + NH4(+) + ATP = L-glutamine + ADP + phosphate + H(+). This is Glutamine synthetase (GLN1) from Saccharomyces cerevisiae (strain ATCC 204508 / S288c) (Baker's yeast).